The chain runs to 540 residues: Maintenance of mitochondrial morphology protein 1 (540 aa).

Residues 1 to 25 (MAGPSNQTQPPPPVLTQPSLSFTQG) are Lumenal-facing. The helical transmembrane segment at 26–46 (LLVGQLSVVLLIGAFIKFFIF) threads the bilayer. Residues 47-540 (GEAPPHPSRN…GSMPDPVVVT (494 aa)) lie on the Cytoplasmic side of the membrane. Disordered stretches follow at residues 52-135 (HPSR…SHQP), 275-331 (GPGT…ATAA), 416-471 (GRTG…GGSM), and 509-540 (YGGAQGGGGGGGRGGEEQFAIPGSMPDPVVVT). 3 stretches are compositionally biased toward polar residues: residues 69 to 81 (YSLNSISADSSPR), 88 to 105 (STSNILRPVPSSSTNTRS), and 112 to 121 (YSATPTNPTS). A compositionally biased stretch (basic residues) spans 122–132 (KHSRSRPHHSS). In terms of domain architecture, SMP-LTD spans 134 to 409 (QPESLDWFNV…EPRVQVVGLP (276 aa)). A compositionally biased stretch (low complexity) spans 321 to 331 (TNTNTAGATAA). Gly residues-rich tracts occupy residues 442–471 (TAGGDGVGVRGGGGGGGGGGGVGGSGGGSM) and 511–521 (GAQGGGGGGGR).

This sequence belongs to the MMM1 family. Homodimer. Component of the ER-mitochondria encounter structure (ERMES) or MDM complex, composed of MMM1, MDM10, MDM12 and MDM34. An MMM1 homodimer associates with one molecule of MDM12 on each side in a pairwise head-to-tail manner, and the SMP-LTD domains of MMM1 and MDM12 generate a continuous hydrophobic tunnel for phospholipid trafficking.

It localises to the endoplasmic reticulum membrane. Its function is as follows. Component of the ERMES/MDM complex, which serves as a molecular tether to connect the endoplasmic reticulum (ER) and mitochondria. Components of this complex are involved in the control of mitochondrial shape and protein biogenesis, and function in nonvesicular lipid trafficking between the ER and mitochondria. The MDM12-MMM1 subcomplex functions in the major beta-barrel assembly pathway that is responsible for biogenesis of all outer membrane beta-barrel proteins, and acts in a late step after the SAM complex. The MDM10-MDM12-MMM1 subcomplex further acts in the TOM40-specific pathway after the action of the MDM12-MMM1 complex. Essential for establishing and maintaining the structure of mitochondria and maintenance of mtDNA nucleoids. This Blastomyces gilchristii (strain SLH14081) (Blastomyces dermatitidis) protein is Maintenance of mitochondrial morphology protein 1.